A 196-amino-acid polypeptide reads, in one-letter code: Chromophore lyase CpcT/CpeT (196 aa).

This sequence belongs to the CpcT/CpeT biliprotein lyase family.

Covalently attaches a chromophore to Cys residue(s) of phycobiliproteins. The polypeptide is Chromophore lyase CpcT/CpeT (Synechococcus sp. (strain WH8020)).